The primary structure comprises 388 residues: Chorismate synthase (388 aa).

Positions 39 and 45 each coordinate NADP(+). Residues Arg-132 to Ser-134, Asn-251 to Ala-252, Gly-296, Lys-311 to Thr-315, and Arg-337 contribute to the FMN site.

This sequence belongs to the chorismate synthase family. Homotetramer. FMNH2 is required as a cofactor.

The enzyme catalyses 5-O-(1-carboxyvinyl)-3-phosphoshikimate = chorismate + phosphate. It functions in the pathway metabolic intermediate biosynthesis; chorismate biosynthesis; chorismate from D-erythrose 4-phosphate and phosphoenolpyruvate: step 7/7. Functionally, catalyzes the anti-1,4-elimination of the C-3 phosphate and the C-6 proR hydrogen from 5-enolpyruvylshikimate-3-phosphate (EPSP) to yield chorismate, which is the branch point compound that serves as the starting substrate for the three terminal pathways of aromatic amino acid biosynthesis. This reaction introduces a second double bond into the aromatic ring system. This is Chorismate synthase from Staphylococcus aureus (strain MW2).